We begin with the raw amino-acid sequence, 282 residues long: Bis(5'-nucleosyl)-tetraphosphatase, symmetrical (282 aa).

This sequence belongs to the Ap4A hydrolase family.

The catalysed reaction is P(1),P(4)-bis(5'-adenosyl) tetraphosphate + H2O = 2 ADP + 2 H(+). Functionally, hydrolyzes diadenosine 5',5'''-P1,P4-tetraphosphate to yield ADP. In Burkholderia thailandensis (strain ATCC 700388 / DSM 13276 / CCUG 48851 / CIP 106301 / E264), this protein is Bis(5'-nucleosyl)-tetraphosphatase, symmetrical.